The primary structure comprises 259 residues: 5'-nucleotidase SurE (259 aa).

Positions 8, 9, 40, and 92 each coordinate a divalent metal cation.

Belongs to the SurE nucleotidase family. A divalent metal cation is required as a cofactor.

The protein localises to the cytoplasm. It carries out the reaction a ribonucleoside 5'-phosphate + H2O = a ribonucleoside + phosphate. Nucleotidase that shows phosphatase activity on nucleoside 5'-monophosphates. The sequence is that of 5'-nucleotidase SurE from Xanthomonas euvesicatoria pv. vesicatoria (strain 85-10) (Xanthomonas campestris pv. vesicatoria).